A 97-amino-acid polypeptide reads, in one-letter code: Co-chaperonin GroES (97 aa).

Belongs to the GroES chaperonin family. In terms of assembly, heptamer of 7 subunits arranged in a ring. Interacts with the chaperonin GroEL.

The protein resides in the cytoplasm. Its function is as follows. Together with the chaperonin GroEL, plays an essential role in assisting protein folding. The GroEL-GroES system forms a nano-cage that allows encapsulation of the non-native substrate proteins and provides a physical environment optimized to promote and accelerate protein folding. GroES binds to the apical surface of the GroEL ring, thereby capping the opening of the GroEL channel. In Oleispira antarctica, this protein is Co-chaperonin GroES.